The following is a 120-amino-acid chain: NAD(P)H-quinone oxidoreductase subunit 3, chloroplastic (120 aa).

Transmembrane regions (helical) follow at residues 9–29 (IFWA…LISA), 64–84 (MFAL…PWAM), and 88–108 (VLGV…IVGL).

Belongs to the complex I subunit 3 family. In terms of assembly, NDH is composed of at least 16 different subunits, 5 of which are encoded in the nucleus.

The protein localises to the plastid. It is found in the chloroplast thylakoid membrane. It carries out the reaction a plastoquinone + NADH + (n+1) H(+)(in) = a plastoquinol + NAD(+) + n H(+)(out). It catalyses the reaction a plastoquinone + NADPH + (n+1) H(+)(in) = a plastoquinol + NADP(+) + n H(+)(out). NDH shuttles electrons from NAD(P)H:plastoquinone, via FMN and iron-sulfur (Fe-S) centers, to quinones in the photosynthetic chain and possibly in a chloroplast respiratory chain. The immediate electron acceptor for the enzyme in this species is believed to be plastoquinone. Couples the redox reaction to proton translocation, and thus conserves the redox energy in a proton gradient. In Citrus sinensis (Sweet orange), this protein is NAD(P)H-quinone oxidoreductase subunit 3, chloroplastic.